The following is a 214-amino-acid chain: ATP phosphoribosyltransferase (214 aa).

Belongs to the ATP phosphoribosyltransferase family. Short subfamily. As to quaternary structure, heteromultimer composed of HisG and HisZ subunits.

It is found in the cytoplasm. The enzyme catalyses 1-(5-phospho-beta-D-ribosyl)-ATP + diphosphate = 5-phospho-alpha-D-ribose 1-diphosphate + ATP. The protein operates within amino-acid biosynthesis; L-histidine biosynthesis; L-histidine from 5-phospho-alpha-D-ribose 1-diphosphate: step 1/9. Its function is as follows. Catalyzes the condensation of ATP and 5-phosphoribose 1-diphosphate to form N'-(5'-phosphoribosyl)-ATP (PR-ATP). Has a crucial role in the pathway because the rate of histidine biosynthesis seems to be controlled primarily by regulation of HisG enzymatic activity. In Streptococcus sanguinis (strain SK36), this protein is ATP phosphoribosyltransferase.